A 373-amino-acid chain; its full sequence is Chorismate synthase (373 aa).

Position 46 (arginine 46) interacts with NADP(+). Residues 123 to 125, 251 to 252, glycine 295, 310 to 314, and arginine 337 contribute to the FMN site; these read RSS, NA, and KPTPS.

This sequence belongs to the chorismate synthase family. FMNH2 serves as cofactor.

The catalysed reaction is 5-O-(1-carboxyvinyl)-3-phosphoshikimate = chorismate + phosphate. The protein operates within metabolic intermediate biosynthesis; chorismate biosynthesis; chorismate from D-erythrose 4-phosphate and phosphoenolpyruvate: step 7/7. Functionally, catalyzes the anti-1,4-elimination of the C-3 phosphate and the C-6 proR hydrogen from 5-enolpyruvylshikimate-3-phosphate (EPSP) to yield chorismate, which is the branch point compound that serves as the starting substrate for the three terminal pathways of aromatic amino acid biosynthesis. This reaction introduces a second double bond into the aromatic ring system. This Methanococcus maripaludis (strain C5 / ATCC BAA-1333) protein is Chorismate synthase.